The primary structure comprises 343 residues: Mitotic checkpoint protein bub-3 (343 aa).

WD repeat units lie at residues 21 to 62 (PPFV…DISE), 67 to 105 (THGK…GTQL), 107 to 146 (SHAL…NGAI), 150 to 187 (NVSS…EPLQ), 192 to 232 (PLKY…EMMK), 249 to 288 (ELIH…RIIQ), and 291 to 331 (KFET…NSIT). Residues 322–343 (PSPLPNNSITIRHITDPESRPK) form a disordered region. Basic and acidic residues predominate over residues 334–343 (HITDPESRPK).

It belongs to the WD repeat BUB3 family. As to quaternary structure, may interact with bub-1; for localization at the kinetochore and the onset of anaphase.

The protein localises to the chromosome. The protein resides in the centromere. It localises to the kinetochore. Its subcellular location is the nucleus. In terms of biological role, has a dual function in spindle-assembly checkpoint signaling and in promoting the establishment of correct kinetochore-microtubule (K-MT) attachments. Promotes the formation of stable end-on bipolar attachments of chromosomes. Necessary for expression and kinetochore localization of bub-1. Plays a role in synapsis checkpoint signaling inducing apoptosis in response to unsynapsed chromosomes and thus controlling chromosomal segregation during oocyte meiosis. In Caenorhabditis elegans, this protein is Mitotic checkpoint protein bub-3.